The chain runs to 362 residues: Glutaminase-asparaginase (362 aa).

Positions 1-25 (MKPLLHAFAPGVMALMLLLPQAAQA) are cleaved as a signal peptide. Residues 35-362 (SNVVILATGG…KELQRIFWEY (328 aa)) form the Asparaginase/glutaminase domain. Catalysis depends on threonine 45, which acts as the Acyl-ester intermediate. Substrate is bound by residues serine 92 and 125–126 (TD).

Belongs to the asparaginase 1 family. Homotetramer.

The protein localises to the periplasm. It catalyses the reaction L-glutamine + H2O = L-glutamate + NH4(+). The catalysed reaction is L-asparagine + H2O = L-aspartate + NH4(+). This chain is Glutaminase-asparaginase (ansB), found in Pseudomonas aeruginosa (strain ATCC 15692 / DSM 22644 / CIP 104116 / JCM 14847 / LMG 12228 / 1C / PRS 101 / PAO1).